The primary structure comprises 703 residues: Polyribonucleotide nucleotidyltransferase (703 aa).

The Mg(2+) site is built by aspartate 489 and aspartate 495. One can recognise a KH domain in the interval 556 to 615 (PTMIAMKIDTDKIRDVIGKGGATIRAICEETKASIDIEDDGSIKIFGETKEAAEAARQRV). An S1 motif domain is found at 625-693 (GKIYVGKVER…NRGRIKLSIK (69 aa)).

This sequence belongs to the polyribonucleotide nucleotidyltransferase family. Component of the RNA degradosome, which is a multiprotein complex involved in RNA processing and mRNA degradation. It depends on Mg(2+) as a cofactor.

Its subcellular location is the cytoplasm. It carries out the reaction RNA(n+1) + phosphate = RNA(n) + a ribonucleoside 5'-diphosphate. Functionally, involved in mRNA degradation. Catalyzes the phosphorolysis of single-stranded polyribonucleotides processively in the 3'- to 5'-direction. This is Polyribonucleotide nucleotidyltransferase from Pseudomonas fluorescens (strain ATCC BAA-477 / NRRL B-23932 / Pf-5).